The primary structure comprises 198 residues: Mediator of RNA polymerase II transcription subunit 20 (198 aa).

Belongs to the Mediator complex subunit 20 family. In terms of assembly, component of the Mediator complex.

It is found in the nucleus. Its function is as follows. Component of the Mediator complex, a coactivator involved in the regulated transcription of nearly all RNA polymerase II-dependent genes. Mediator functions as a bridge to convey information from gene-specific regulatory proteins to the basal RNA polymerase II transcription machinery. Mediator is recruited to promoters by direct interactions with regulatory proteins and serves as a scaffold for the assembly of a functional preinitiation complex with RNA polymerase II and the general transcription factors. The sequence is that of Mediator of RNA polymerase II transcription subunit 20 (mdt-20) from Caenorhabditis briggsae.